The sequence spans 371 residues: GTPase Obg (371 aa).

The 159-residue stretch at 1-159 folds into the Obg domain; sequence MKFLDQAKVY…KTIWLRLKLI (159 aa). The OBG-type G domain maps to 160–327; that stretch reads ADAGLVGLPN…VLRALRDIIV (168 aa). GTP is bound by residues 166–173, 191–195, 212–215, 279–282, and 308–310; these read GLPNAGKS, FTTLH, DIPG, SQID, and SAI. Residues serine 173 and threonine 193 each contribute to the Mg(2+) site. Residues 337-371 form a disordered region; that stretch reads APMKALKVRHRDMQSSGNEGESEDNSDRDDEEQQG. Over residues 356 to 371 the composition is skewed to acidic residues; that stretch reads GESEDNSDRDDEEQQG.

Belongs to the TRAFAC class OBG-HflX-like GTPase superfamily. OBG GTPase family. As to quaternary structure, monomer. The cofactor is Mg(2+).

It localises to the cytoplasm. In terms of biological role, an essential GTPase which binds GTP, GDP and possibly (p)ppGpp with moderate affinity, with high nucleotide exchange rates and a fairly low GTP hydrolysis rate. Plays a role in control of the cell cycle, stress response, ribosome biogenesis and in those bacteria that undergo differentiation, in morphogenesis control. The chain is GTPase Obg from Rhizobium rhizogenes (strain K84 / ATCC BAA-868) (Agrobacterium radiobacter).